The following is a 592-amino-acid chain: Colicin-A (592 aa).

Composition is skewed to gly residues over residues 1 to 13 (MPGF…GDGT) and 23 to 34 (PEPGGGSHGNSG). Disordered regions lie at residues 1–57 (MPGF…PGDS) and 373–395 (RQRQ…KAKD). Transmembrane regions (helical) follow at residues 528 to 548 (WVLS…TLGA) and 555 to 575 (VPAI…GALI).

This sequence belongs to the channel forming colicin family.

The protein localises to the cell membrane. Functionally, this colicin is a channel-forming colicin. This class of transmembrane toxins depolarize the cytoplasmic membrane, leading to dissipation of cellular energy. In terms of biological role, colicins are polypeptide toxins produced by and active against E.coli and closely related bacteria. This is Colicin-A (caa) from Citrobacter freundii.